Reading from the N-terminus, the 202-residue chain is FMN-dependent NADH:quinone oxidoreductase (202 aa).

Residues S9 and 95–98 each bind FMN; that span reads MYNF.

It belongs to the azoreductase type 1 family. Homodimer. It depends on FMN as a cofactor.

The catalysed reaction is 2 a quinone + NADH + H(+) = 2 a 1,4-benzosemiquinone + NAD(+). It catalyses the reaction N,N-dimethyl-1,4-phenylenediamine + anthranilate + 2 NAD(+) = 2-(4-dimethylaminophenyl)diazenylbenzoate + 2 NADH + 2 H(+). Functionally, quinone reductase that provides resistance to thiol-specific stress caused by electrophilic quinones. Its function is as follows. Also exhibits azoreductase activity. Catalyzes the reductive cleavage of the azo bond in aromatic azo compounds to the corresponding amines. This chain is FMN-dependent NADH:quinone oxidoreductase, found in Chromobacterium violaceum (strain ATCC 12472 / DSM 30191 / JCM 1249 / CCUG 213 / NBRC 12614 / NCIMB 9131 / NCTC 9757 / MK).